We begin with the raw amino-acid sequence, 181 residues long: Large ribosomal subunit protein uL5c (181 aa).

This sequence belongs to the universal ribosomal protein uL5 family. In terms of assembly, part of the 50S ribosomal subunit; contacts the 5S rRNA.

It localises to the plastid. It is found in the chloroplast. Functionally, binds 5S rRNA, forms part of the central protuberance of the 50S subunit. This chain is Large ribosomal subunit protein uL5c (rpl5), found in Heterosigma akashiwo (strain NIES-293 / 8280G21-1).